A 534-amino-acid chain; its full sequence is ATP synthase subunit alpha (534 aa).

An ATP-binding site is contributed by 170-177 (GDRQTGKT). The tract at residues 505–534 (HEDARVKSETAQAAGKDKDEKAAATAGAGK) is disordered.

The protein belongs to the ATPase alpha/beta chains family. F-type ATPases have 2 components, CF(1) - the catalytic core - and CF(0) - the membrane proton channel. CF(1) has five subunits: alpha(3), beta(3), gamma(1), delta(1), epsilon(1). CF(0) has three main subunits: a(1), b(2) and c(9-12). The alpha and beta chains form an alternating ring which encloses part of the gamma chain. CF(1) is attached to CF(0) by a central stalk formed by the gamma and epsilon chains, while a peripheral stalk is formed by the delta and b chains.

The protein localises to the cell inner membrane. It catalyses the reaction ATP + H2O + 4 H(+)(in) = ADP + phosphate + 5 H(+)(out). Functionally, produces ATP from ADP in the presence of a proton gradient across the membrane. The alpha chain is a regulatory subunit. The polypeptide is ATP synthase subunit alpha (Acidobacterium capsulatum (strain ATCC 51196 / DSM 11244 / BCRC 80197 / JCM 7670 / NBRC 15755 / NCIMB 13165 / 161)).